We begin with the raw amino-acid sequence, 549 residues long: Threonine--tRNA ligase catalytic subunit (549 aa).

The segment at 142-437 (DHRIIGDRLD…LLEHFRGKLP (296 aa)) is catalytic. Zn(2+) contacts are provided by Cys235, His286, and His414.

The protein belongs to the class-II aminoacyl-tRNA synthetase family. In terms of assembly, homodimer. Probably interacts with its editing subunit. Requires Zn(2+) as cofactor.

It localises to the cytoplasm. It carries out the reaction tRNA(Thr) + L-threonine + ATP = L-threonyl-tRNA(Thr) + AMP + diphosphate + H(+). Functionally, catalyzes the attachment of threonine to tRNA(Thr) in a two-step reaction: L-threonine is first activated by ATP to form Thr-AMP and then transferred to the acceptor end of tRNA(Thr). Also activates L-serine and transfers it to tRNA(Thr) but cannot deacylate incorrectly charged amino acid; unlike most archaea the editing function is found in a freestanding protein. The sequence is that of Threonine--tRNA ligase catalytic subunit from Sulfolobus acidocaldarius (strain ATCC 33909 / DSM 639 / JCM 8929 / NBRC 15157 / NCIMB 11770).